Consider the following 246-residue polypeptide: MTHSTRILLGVNIDHVATLRQARGTRYPDPVKAALDAEEAGADGITVHLREDRRHIQERDVLLLKDVLQTRMNFEMGVTEDMLAFAERIRPAHICLVPETRQELTTEGGLDVAGQEARIKAAVERLAKIGCEVSLFIDADERQIAASKRVGAPAIELHTGRYADAQTPTEVAEELQRVADGVAFGLAQGLVVNAGHGLHYHNVEAVAAIKGINELNIGHALVAHALFVGFKAAVAEMKALIVAAAR.

A 3-amino-2-oxopropyl phosphate-binding site is contributed by Asn-12. Position 14–15 (Asp-14–His-15) interacts with 1-deoxy-D-xylulose 5-phosphate. 3-amino-2-oxopropyl phosphate is bound at residue Arg-23. The active-site Proton acceptor is His-48. Residues Arg-50 and His-55 each coordinate 1-deoxy-D-xylulose 5-phosphate. Glu-75 acts as the Proton acceptor in catalysis. Thr-105 lines the 1-deoxy-D-xylulose 5-phosphate pocket. The active-site Proton donor is His-196. Residues Gly-197 and Gly-218–His-219 each bind 3-amino-2-oxopropyl phosphate.

This sequence belongs to the PNP synthase family. Homooctamer; tetramer of dimers.

The protein localises to the cytoplasm. The catalysed reaction is 3-amino-2-oxopropyl phosphate + 1-deoxy-D-xylulose 5-phosphate = pyridoxine 5'-phosphate + phosphate + 2 H2O + H(+). Its pathway is cofactor biosynthesis; pyridoxine 5'-phosphate biosynthesis; pyridoxine 5'-phosphate from D-erythrose 4-phosphate: step 5/5. In terms of biological role, catalyzes the complicated ring closure reaction between the two acyclic compounds 1-deoxy-D-xylulose-5-phosphate (DXP) and 3-amino-2-oxopropyl phosphate (1-amino-acetone-3-phosphate or AAP) to form pyridoxine 5'-phosphate (PNP) and inorganic phosphate. This chain is Pyridoxine 5'-phosphate synthase, found in Pseudomonas syringae pv. syringae (strain B728a).